The following is a 297-amino-acid chain: MNKLISLLLVCLVAIALVNADCAIDFDSDTVNSVTSSDWSCLAASNDRVIMQVFSGGYGYTSGIASAVQGAQAAGISTIDLYAFLCNQCSGNSPSSSAIQSIVSQLQNDGVSYNMLWIDVEQCDGCWGDLGDNAAFVQEAVETAQNLGVNVGVYSSIGEWSQTVGNLSGLGVDLWYAHYDNNPSFSDSSFYEFGGWTSPTMKQYAGNGNECGVSVDMNFFGSGTCSASTGSGSGSSSGSSSGSSSGSSSGSGSSSGSGSSSGSSSGSGSGSSSSGSGSGSGSSSGSGSSSGSGSGSS.

The signal sequence occupies residues 1 to 20; sequence MNKLISLLLVCLVAIALVNA. In terms of domain architecture, Ch-type lysozyme spans 24–235; the sequence is IDFDSDTVNS…SASTGSGSGS (212 aa). Catalysis depends on residues D29, D119, and E121. An N-linked (GlcNAc...) asparagine glycan is attached at N166. Residues 231-296 are S-G-S motif repeats; that stretch reads SGSGSSSGSS…GSSSGSGSGS (66 aa). The interval 231-297 is disordered; the sequence is SGSGSSSGSS…SSSGSGSGSS (67 aa). Residues 234–275 are compositionally biased toward low complexity; it reads GSSSGSSSGSSSGSSSGSGSSSGSGSSSGSSSGSGSGSSSSG. Residues 276–297 show a composition bias toward gly residues; it reads SGSGSGSSSGSGSSSGSGSGSS.

This sequence belongs to the glycosyl hydrolase 25 family. As to quaternary structure, monomer. Component of the counting factor (CF) complex, which includes cf60, cf50, cf45-1 and ctnA.

It is found in the secreted. Functionally, cell-counting factor that limits the maximum size of the multicellular structure during aggregation. The polypeptide is Counting factor 45-1 (cf45-1) (Dictyostelium discoideum (Social amoeba)).